The primary structure comprises 359 residues: Peptide chain release factor 1 (359 aa).

At glutamine 235 the chain carries N5-methylglutamine. Residues 282–307 show a composition bias toward basic and acidic residues; it reads RQRADSERSADRKSQVGSGDRSERIR. The tract at residues 282–309 is disordered; that stretch reads RQRADSERSADRKSQVGSGDRSERIRTY.

The protein belongs to the prokaryotic/mitochondrial release factor family. Methylated by PrmC. Methylation increases the termination efficiency of RF1.

Its subcellular location is the cytoplasm. Peptide chain release factor 1 directs the termination of translation in response to the peptide chain termination codons UAG and UAA. The sequence is that of Peptide chain release factor 1 from Allorhizobium ampelinum (strain ATCC BAA-846 / DSM 112012 / S4) (Agrobacterium vitis (strain S4)).